A 254-amino-acid polypeptide reads, in one-letter code: 3-dehydroquinate dehydratase (254 aa).

3-dehydroquinate is bound by residues 47–49 and Arg-83; that span reads EWR. Catalysis depends on His-144, which acts as the Proton donor/acceptor. The Schiff-base intermediate with substrate role is filled by Lys-171. 3 residues coordinate 3-dehydroquinate: Arg-214, Ser-233, and Gln-237.

The protein belongs to the type-I 3-dehydroquinase family. In terms of assembly, homodimer.

The catalysed reaction is 3-dehydroquinate = 3-dehydroshikimate + H2O. Its pathway is metabolic intermediate biosynthesis; chorismate biosynthesis; chorismate from D-erythrose 4-phosphate and phosphoenolpyruvate: step 3/7. Involved in the third step of the chorismate pathway, which leads to the biosynthesis of aromatic amino acids. Catalyzes the cis-dehydration of 3-dehydroquinate (DHQ) and introduces the first double bond of the aromatic ring to yield 3-dehydroshikimate. The chain is 3-dehydroquinate dehydratase from Bacillus licheniformis (strain ATCC 14580 / DSM 13 / JCM 2505 / CCUG 7422 / NBRC 12200 / NCIMB 9375 / NCTC 10341 / NRRL NRS-1264 / Gibson 46).